The sequence spans 255 residues: MMVTARTPWGWFLGCLILEVTGASASSVSSRIIQGQDCSPHSQPWQAALFSEDGFFCSGVLVHPQWVLSAAHCLQESYIVGLGLHNLKGSQEPGSRMLEAHLSIQHPNFNDPSFANDLMLIKLNESVIESNTIRSIPVATQCPTPGDTCLVSGWGQLKNGKLPSLLQCVNLSVASEETCRLLYDPVYHLSMFCAGGGQDQKDSCNGDSGGPIVCNRSLQGLVSMGQGKCGQPGIPSVYTNLCKFTNWIQTIIQTN.

A signal peptide spans 1 to 25 (MMVTARTPWGWFLGCLILEVTGASA). The propeptide occupies 26-31 (SSVSSR). In terms of domain architecture, Peptidase S1 spans 32–253 (IIQGQDCSPH…FTNWIQTIIQ (222 aa)). H41 lines the Zn(2+) pocket. An intrachain disulfide couples C57 to C73. H72 (charge relay system) is an active-site residue. Zn(2+) is bound at residue E92. The Charge relay system role is filled by D117. 2 N-linked (GlcNAc...) asparagine glycosylation sites follow: N124 and N170. 3 cysteine pairs are disulfide-bonded: C149–C214, C179–C193, and C204–C229. Residue S208 is the Charge relay system of the active site.

It belongs to the peptidase S1 family. Kallikrein subfamily. Post-translationally, N-glycosylated. The N-glycan structures are of complex diantennary or triantennary type, which may be further modified with up to 2 sialic acid residues.

It localises to the secreted. Functionally, has a major role in enamel formation. Required during the maturation stage of tooth development for clearance of enamel proteins and normal structural patterning of the crystalline matrix. The protein is Kallikrein-4 of Mus musculus (Mouse).